The following is a 71-amino-acid chain: Small ribosomal subunit protein bS21 (71 aa).

It belongs to the bacterial ribosomal protein bS21 family.

This Buchnera aphidicola subsp. Cinara cedri (strain Cc) protein is Small ribosomal subunit protein bS21.